Reading from the N-terminus, the 722-residue chain is Probable acyl-activating enzyme 16, chloroplastic (722 aa).

Residues 1 to 47 constitute a chloroplast transit peptide; that stretch reads MASTSLGASILVSHCSSAPEFQVSGMRLVFGYKAFGCRTSRRGFRVR.

It belongs to the ATP-dependent AMP-binding enzyme family.

It is found in the plastid. Its subcellular location is the chloroplast. Functionally, may be involved in the activation of fatty acids to acyl-carrier-protein. This chain is Probable acyl-activating enzyme 16, chloroplastic (AAE16), found in Arabidopsis thaliana (Mouse-ear cress).